The following is a 262-amino-acid chain: Triosephosphate isomerase (262 aa).

13-15 (NWK) serves as a coordination point for substrate. His-103 functions as the Electrophile in the catalytic mechanism. Glu-175 (proton acceptor) is an active-site residue. Residues Gly-181, Ser-221, and 242-243 (GG) contribute to the substrate site.

Belongs to the triosephosphate isomerase family. As to quaternary structure, homodimer.

Its subcellular location is the cytoplasm. The catalysed reaction is D-glyceraldehyde 3-phosphate = dihydroxyacetone phosphate. It participates in carbohydrate biosynthesis; gluconeogenesis. It functions in the pathway carbohydrate degradation; glycolysis; D-glyceraldehyde 3-phosphate from glycerone phosphate: step 1/1. Involved in the gluconeogenesis. Catalyzes stereospecifically the conversion of dihydroxyacetone phosphate (DHAP) to D-glyceraldehyde-3-phosphate (G3P). This chain is Triosephosphate isomerase, found in Corynebacterium efficiens (strain DSM 44549 / YS-314 / AJ 12310 / JCM 11189 / NBRC 100395).